A 60-amino-acid chain; its full sequence is Cytotoxin sagitoxin (60 aa).

4 cysteine pairs are disulfide-bonded: Cys3/Cys21, Cys14/Cys38, Cys42/Cys53, and Cys54/Cys59.

Belongs to the three-finger toxin family. Short-chain subfamily. Type IA cytotoxin sub-subfamily. As to quaternary structure, monomer in solution; Homodimer and oligomer (homohexamer) in the presence of negatively charged lipids forming a pore with a size ranging between 20 and 30 Angstroms. As to expression, expressed by the venom gland.

It is found in the secreted. The protein localises to the target cell membrane. In terms of biological role, shows cytolytic activity on many different cells by forming pore in lipid membranes. In vivo, increases heart rate or kill the animal by cardiac arrest. In addition, it binds to heparin with high affinity, interacts with Kv channel-interacting protein 1 (KCNIP1) in a calcium-independent manner, and binds to integrin alpha-V/beta-3 (ITGAV/ITGB3) with moderate affinity. This chain is Cytotoxin sagitoxin, found in Naja sagittifera (Andaman cobra).